A 599-amino-acid polypeptide reads, in one-letter code: Retrotransposon Gag-like protein 5 (599 aa).

Disordered stretches follow at residues 77 to 97 (DPTP…CWPP), 116 to 139 (DYTN…ELHS), and 377 to 450 (FPQE…EEDE). Residues 78–90 (PTPEEEEEEEEEV) show a composition bias toward acidic residues. Acidic residues-rich tracts occupy residues 393–432 (DEME…EDKE) and 439–450 (DSDENKYEEEDE).

The polypeptide is Retrotransposon Gag-like protein 5 (Mus musculus (Mouse)).